The sequence spans 318 residues: Methionyl-tRNA formyltransferase (318 aa).

112–115 provides a ligand contact to (6S)-5,6,7,8-tetrahydrofolate; it reads SILP.

This sequence belongs to the Fmt family.

The catalysed reaction is L-methionyl-tRNA(fMet) + (6R)-10-formyltetrahydrofolate = N-formyl-L-methionyl-tRNA(fMet) + (6S)-5,6,7,8-tetrahydrofolate + H(+). In terms of biological role, attaches a formyl group to the free amino group of methionyl-tRNA(fMet). The formyl group appears to play a dual role in the initiator identity of N-formylmethionyl-tRNA by promoting its recognition by IF2 and preventing the misappropriation of this tRNA by the elongation apparatus. This chain is Methionyl-tRNA formyltransferase, found in Shewanella sp. (strain MR-4).